A 63-amino-acid polypeptide reads, in one-letter code: Large ribosomal subunit protein eL37 (63 aa).

C20, C23, C35, and C38 together coordinate Zn(2+). The C4-type zinc-finger motif lies at 20-38 (CRRCGRRAFNVKKGYCAAC).

This sequence belongs to the eukaryotic ribosomal protein eL37 family. Zn(2+) serves as cofactor.

Its function is as follows. Binds to the 23S rRNA. The chain is Large ribosomal subunit protein eL37 from Thermococcus gammatolerans (strain DSM 15229 / JCM 11827 / EJ3).